We begin with the raw amino-acid sequence, 262 residues long: MQQPIIGVGHSMGGCQIATLSVTSRRMFSTMILLDPAIGPPDMGLATLDLGQLTLRRRTQWPTREDAEKALRTSFSTWDSQVLNLLIKHSIHSDKQSIEMEDGPVSLVTGRYQELVNYIKPSFIRSGKVNGQELIHQTGPVDMYHMLGLVTCSALYLCGGESTLSVPRVRDLWLNRTAKLSYSKEPGETRKVDERIVPDTGHFLPMEEPKKCADIIADWIEKDKCIAWNCCVGKRGKTWCELSNASKEMSAEAWMKYLQSKL.

A Peroxisomal targeting signal type 1 motif is present at residues 260 to 262 (SKL).

The protein belongs to the AB hydrolase superfamily. AKT2 hydrolase family.

The protein localises to the peroxisome. It functions in the pathway mycotoxin biosynthesis. Functionally, abhydrolase domain-containing protein; part of the gene clusters that mediate the biosynthesis of the host-selective toxins (HSTs) AK-toxins responsible for Japanese pear black spot disease by the Japanese pear pathotype. AK-toxins are esters of 9,10-epoxy 8-hydroxy 9-methyldecatrienoic acid (EDA). On cellular level, AK-toxins affect plasma membrane of susceptible cells and cause a sudden increase in loss of K(+) after a few minutes of toxin treatment. The acyl-CoA ligase AKT1, the hydrolase AKT2 and enoyl-CoA hydratase AKT3 are all involved in the biosynthesis of the AK-, AF- and ACT-toxin common 9,10-epoxy-8-hydroxy-9-methyl-decatrienoic acid (EDA) structural moiety. Part of the EDA biosynthesis occurs in the peroxisome since these 3 enzymes are localized in peroxisomes. The exact roles of the 3 enzymes, as well as of additional AK-toxin clusters enzymes, including AKT4, AKT6 and AKTS1, have still to be elucidated. The Cytochrome P450 monooxygenase AKT7 on the other side functions to limit production of EDA and AK-toxin, probably via the catalysis of a side reaction of EDA or its precursor. The chain is Abhydrolase domain-containing protein AKT2 from Alternaria alternata (Alternaria rot fungus).